The sequence spans 514 residues: Probable drug/proton antiporter YHK8 (514 aa).

Residues Met1–Tyr74 are Cytoplasmic-facing. Residues Ile75–Leu95 form a helical membrane-spanning segment. The Extracellular segment spans residues Pro96–Ser111. A helical membrane pass occupies residues Thr112–Leu132. At Ser133–Thr141 the chain is on the cytoplasmic side. A helical transmembrane segment spans residues Phe142–Ile162. Residues Thr163–Phe170 are Extracellular-facing. Residues Leu171–Phe191 traverse the membrane as a helical segment. The Cytoplasmic portion of the chain corresponds to Asp192–Met200. Residues Ala201–Leu221 traverse the membrane as a helical segment. Topologically, residues Tyr222–Lys227 are extracellular. Residues Trp228 to Ile248 traverse the membrane as a helical segment. Topologically, residues Pro249 to Met307 are cytoplasmic. A helical membrane pass occupies residues Gly308–Phe328. Over Pro329 to Glu342 the chain is Extracellular. The chain crosses the membrane as a helical span at residues Ile343–Leu363. Over Phe364–Glu386 the chain is Cytoplasmic. The chain crosses the membrane as a helical span at residues Pro387–Tyr407. The Extracellular segment spans residues Lys408 to Trp412. Residues Ile413–Val433 form a helical membrane-spanning segment. Topologically, residues Phe434–Ser447 are cytoplasmic. Residues Gly448–Leu468 traverse the membrane as a helical segment. The Extracellular portion of the chain corresponds to Gln469 to Asn477. A helical membrane pass occupies residues Trp478–Thr498. Residues Lys499 to Asp514 are Cytoplasmic-facing.

It belongs to the major facilitator superfamily. CAR1 family.

It localises to the membrane. Functionally, probable drug/proton antiporter. The protein is Probable drug/proton antiporter YHK8 (YHK8) of Saccharomyces cerevisiae (strain ATCC 204508 / S288c) (Baker's yeast).